Reading from the N-terminus, the 987-residue chain is KAT8 regulatory NSL complex subunit 1-like protein (987 aa).

Lys134 participates in a covalent cross-link: Glycyl lysine isopeptide (Lys-Gly) (interchain with G-Cter in SUMO2). Ser462 carries the post-translational modification Phosphoserine. The disordered stretch occupies residues 708–738; the sequence is RKKRHLSETALGERTKLEESDFQHTESGSHS. A compositionally biased stretch (basic and acidic residues) spans 718-731; that stretch reads LGERTKLEESDFQH. The region spanning 794-915 is the PEHE domain; that stretch reads EILTPSWRMV…QSQETKSLWW (122 aa). An N6-acetyllysine modification is found at Lys859. The segment at 949–972 is disordered; it reads GEIFGTSVPENGHHPKKQSDGMEE. Positions 959–972 are enriched in basic and acidic residues; the sequence is NGHHPKKQSDGMEE.

Post-translationally, acetylated on lysine residues by KAT8 upon ionizing radiation-induced DNA damage; deacetylated by HDAC3.

The chain is KAT8 regulatory NSL complex subunit 1-like protein (KANSL1L) from Homo sapiens (Human).